A 638-amino-acid polypeptide reads, in one-letter code: Carbon monoxide dehydrogenase (638 aa).

[4Fe-4S] cluster is bound by residues Cys-46, Cys-55, Cys-58, Cys-63, and Cys-74. 6 residues coordinate [Ni-4Fe-5S] cluster: His-265, Cys-299, Cys-343, Cys-452, Cys-483, and Cys-524.

The protein belongs to the Ni-containing carbon monoxide dehydrogenase family. In terms of assembly, homodimer. The cofactor is [4Fe-4S] cluster. [Ni-4Fe-5S] cluster serves as cofactor.

It catalyses the reaction CO + 2 oxidized [2Fe-2S]-[ferredoxin] + H2O = 2 reduced [2Fe-2S]-[ferredoxin] + CO2 + 2 H(+). Functionally, CODH oxidizes carbon monoxide coupled, via CooF, to the reduction of a hydrogen cation by a hydrogenase (possibly CooH). In Methanopyrus kandleri (strain AV19 / DSM 6324 / JCM 9639 / NBRC 100938), this protein is Carbon monoxide dehydrogenase (cooS).